Reading from the N-terminus, the 330-residue chain is Erlin-2-B (330 aa).

Residues 1–2 lie on the Cytoplasmic side of the membrane; it reads MS. The chain crosses the membrane as a helical span at residues 3-23; it reads HAGAIAALGVALIAAALFSAI. Residues 24–330 lie on the Lumenal side of the membrane; sequence HKIEEGHVGV…NEPAAAEELK (307 aa). Residue N106 is glycosylated (N-linked (GlcNAc...) asparagine). Positions 308–330 are disordered; the sequence is SSSAGPRVQSAKRNEPAAAEELK. The segment covering 319 to 330 has biased composition (basic and acidic residues); sequence KRNEPAAAEELK.

Belongs to the band 7/mec-2 family.

Its subcellular location is the endoplasmic reticulum membrane. Its function is as follows. Mediates the endoplasmic reticulum-associated degradation (ERAD) of inositol 1,4,5-trisphosphate receptors (IP3Rs). Promotes sterol-accelerated ERAD of HMGCR. Involved in regulation of cellular cholesterol homeostasis by regulation the SREBP signaling pathway. The polypeptide is Erlin-2-B (erlin2-b) (Xenopus laevis (African clawed frog)).